The following is a 318-amino-acid chain: Putative S-adenosyl-L-methionine-dependent methyltransferase BCG_0781c (318 aa).

S-adenosyl-L-methionine contacts are provided by residues Asp135 and 164–165 (DL).

This sequence belongs to the UPF0677 family.

Its function is as follows. Exhibits S-adenosyl-L-methionine-dependent methyltransferase activity. The polypeptide is Putative S-adenosyl-L-methionine-dependent methyltransferase BCG_0781c (Mycobacterium bovis (strain BCG / Pasteur 1173P2)).